The sequence spans 113 residues: Integration host factor subunit alpha (113 aa).

Positions 88 to 113 are disordered; it reads ALNGGVSDETEGADDDDDDEEGEGDE. Residues 95 to 113 are compositionally biased toward acidic residues; that stretch reads DETEGADDDDDDEEGEGDE.

Belongs to the bacterial histone-like protein family. As to quaternary structure, heterodimer of an alpha and a beta chain.

In terms of biological role, this protein is one of the two subunits of integration host factor, a specific DNA-binding protein that functions in genetic recombination as well as in transcriptional and translational control. In Anaeromyxobacter dehalogenans (strain 2CP-C), this protein is Integration host factor subunit alpha.